Here is a 120-residue protein sequence, read N- to C-terminus: Ribonuclease P protein component (120 aa).

This sequence belongs to the RnpA family. Consists of a catalytic RNA component (M1 or rnpB) and a protein subunit.

The catalysed reaction is Endonucleolytic cleavage of RNA, removing 5'-extranucleotides from tRNA precursor.. Functionally, RNaseP catalyzes the removal of the 5'-leader sequence from pre-tRNA to produce the mature 5'-terminus. It can also cleave other RNA substrates such as 4.5S RNA. The protein component plays an auxiliary but essential role in vivo by binding to the 5'-leader sequence and broadening the substrate specificity of the ribozyme. This is Ribonuclease P protein component from Chlamydia trachomatis serovar D (strain ATCC VR-885 / DSM 19411 / UW-3/Cx).